Here is a 453-residue protein sequence, read N- to C-terminus: Ribosomal protein uS12 methylthiotransferase RimO (453 aa).

An MTTase N-terminal domain is found at 6-116; sequence PKVGFVSLGC…VMEAVHEALP (111 aa). [4Fe-4S] cluster-binding residues include Cys-15, Cys-51, Cys-80, Cys-147, Cys-151, and Cys-154. Residues 133–370 enclose the Radical SAM core domain; sequence LTPRHYAYLK…MEKQAQISAA (238 aa). In terms of domain architecture, TRAM spans 373–441; that stretch reads EAKIGTVQQC…EHDLYGDALP (69 aa).

This sequence belongs to the methylthiotransferase family. RimO subfamily. It depends on [4Fe-4S] cluster as a cofactor.

Its subcellular location is the cytoplasm. It catalyses the reaction L-aspartate(89)-[ribosomal protein uS12]-hydrogen + (sulfur carrier)-SH + AH2 + 2 S-adenosyl-L-methionine = 3-methylsulfanyl-L-aspartate(89)-[ribosomal protein uS12]-hydrogen + (sulfur carrier)-H + 5'-deoxyadenosine + L-methionine + A + S-adenosyl-L-homocysteine + 2 H(+). Functionally, catalyzes the methylthiolation of an aspartic acid residue of ribosomal protein uS12. The sequence is that of Ribosomal protein uS12 methylthiotransferase RimO from Stenotrophomonas maltophilia (strain K279a).